Here is a 184-residue protein sequence, read N- to C-terminus: ATP synthase subunit delta (184 aa).

It belongs to the ATPase delta chain family. As to quaternary structure, F-type ATPases have 2 components, F(1) - the catalytic core - and F(0) - the membrane proton channel. F(1) has five subunits: alpha(3), beta(3), gamma(1), delta(1), epsilon(1). F(0) has three main subunits: a(1), b(2) and c(10-14). The alpha and beta chains form an alternating ring which encloses part of the gamma chain. F(1) is attached to F(0) by a central stalk formed by the gamma and epsilon chains, while a peripheral stalk is formed by the delta and b chains.

It is found in the cell inner membrane. Its function is as follows. F(1)F(0) ATP synthase produces ATP from ADP in the presence of a proton or sodium gradient. F-type ATPases consist of two structural domains, F(1) containing the extramembraneous catalytic core and F(0) containing the membrane proton channel, linked together by a central stalk and a peripheral stalk. During catalysis, ATP synthesis in the catalytic domain of F(1) is coupled via a rotary mechanism of the central stalk subunits to proton translocation. In terms of biological role, this protein is part of the stalk that links CF(0) to CF(1). It either transmits conformational changes from CF(0) to CF(1) or is implicated in proton conduction. The polypeptide is ATP synthase subunit delta (Rickettsia felis (strain ATCC VR-1525 / URRWXCal2) (Rickettsia azadi)).